The sequence spans 329 residues: MKSMKIAVIPGDGIGVEVMEAALHILNTLDLDLEFIHADAGDACLKRTGTALPEETLEAVGEARATLFGAAGESAADVIVRLRREFDLFANLRPVKSLPGVPCLYPDLDFVIVRENTEDLYVGDEEYTPEGAVAKRIITRTASRRISQFAFQYAQKEGMQKVTAVHKANVLKKTDGIFRDEFYKVASEYPQMEATDYYVDATAMYLITQPQEFQTIVTTNLFGDILSDEAAGLIGGLGLAPSANIGEKNALFEPVHGSAPQIAGKNIANPTAMILTTTLMLKHLNKKQEAQKIEKALQKTLAEGLVTPDLGGKLGTMEMAAEIARHLED.

Substrate contacts are provided by Arg83, Arg93, Arg114, and Asp200. The Mg(2+) site is built by Asp200, Asp224, and Asp228. 257–269 (GSAPQIAGKNIAN) serves as a coordination point for NAD(+).

It belongs to the isocitrate and isopropylmalate dehydrogenases family. As to quaternary structure, homotetramer. The cofactor is Mg(2+). Requires Mn(2+) as cofactor.

The protein resides in the cytoplasm. The enzyme catalyses (2R,3S)-3-isopropylmalate + NAD(+) = 4-methyl-2-oxopentanoate + CO2 + NADH. It functions in the pathway amino-acid biosynthesis; L-leucine biosynthesis; L-leucine from 3-methyl-2-oxobutanoate: step 3/4. In terms of biological role, catalyzes the oxidation of 3-carboxy-2-hydroxy-4-methylpentanoate (3-isopropylmalate) to 3-carboxy-4-methyl-2-oxopentanoate. The product decarboxylates to 4-methyl-2 oxopentanoate. The polypeptide is 3-isopropylmalate dehydrogenase (leuB) (Methanothermobacter thermautotrophicus (strain ATCC 29096 / DSM 1053 / JCM 10044 / NBRC 100330 / Delta H) (Methanobacterium thermoautotrophicum)).